The primary structure comprises 566 residues: Urease subunit alpha (566 aa).

Positions 128 to 566 constitute a Urease domain; it reads GGIDTHIHWI…LPMAQRYFLF (439 aa). Residues histidine 133, histidine 135, and lysine 216 each coordinate Ni(2+). Position 216 is an N6-carboxylysine (lysine 216). Histidine 218 lines the substrate pocket. Ni(2+) is bound by residues histidine 245 and histidine 271. Histidine 319 acts as the Proton donor in catalysis. Aspartate 359 provides a ligand contact to Ni(2+).

The protein belongs to the metallo-dependent hydrolases superfamily. Urease alpha subunit family. As to quaternary structure, heterotrimer of UreA (gamma), UreB (beta) and UreC (alpha) subunits. Three heterotrimers associate to form the active enzyme. Ni cation serves as cofactor. In terms of processing, carboxylation allows a single lysine to coordinate two nickel ions.

It localises to the cytoplasm. It catalyses the reaction urea + 2 H2O + H(+) = hydrogencarbonate + 2 NH4(+). It functions in the pathway nitrogen metabolism; urea degradation; CO(2) and NH(3) from urea (urease route): step 1/1. This Acinetobacter baylyi (strain ATCC 33305 / BD413 / ADP1) protein is Urease subunit alpha.